Reading from the N-terminus, the 155-residue chain is Ribosome maturation factor RimP (155 aa).

This sequence belongs to the RimP family.

The protein resides in the cytoplasm. Functionally, required for maturation of 30S ribosomal subunits. The sequence is that of Ribosome maturation factor RimP from Synechococcus sp. (strain RCC307).